A 452-amino-acid polypeptide reads, in one-letter code: 23S rRNA (uracil(1939)-C(5))-methyltransferase RlmD (452 aa).

Residues 1-57 form the TRAM domain; the sequence is METEVNVAEISALDYEGRGVTKVGGKTVFIKGALPSERVGFRIVRQKKQFDEAEAVA. [4Fe-4S] cluster contacts are provided by cysteine 70, cysteine 76, cysteine 79, and cysteine 157. The S-adenosyl-L-methionine site is built by glutamine 269, phenylalanine 298, asparagine 303, glutamate 319, asparagine 347, and aspartate 368. The active-site Nucleophile is the cysteine 395.

Belongs to the class I-like SAM-binding methyltransferase superfamily. RNA M5U methyltransferase family. RlmD subfamily.

It carries out the reaction uridine(1939) in 23S rRNA + S-adenosyl-L-methionine = 5-methyluridine(1939) in 23S rRNA + S-adenosyl-L-homocysteine + H(+). Catalyzes the formation of 5-methyl-uridine at position 1939 (m5U1939) in 23S rRNA. This Neisseria lactamica (strain 020-06) protein is 23S rRNA (uracil(1939)-C(5))-methyltransferase RlmD.